Reading from the N-terminus, the 196-residue chain is DnaA initiator-associating protein DiaA (196 aa).

The SIS domain maps to 34 to 196 (MVQSLLNGNK…DNTLFPHQND (163 aa)).

Belongs to the SIS family. DiaA subfamily. As to quaternary structure, homotetramer; dimer of dimers.

Required for the timely initiation of chromosomal replication via direct interactions with the DnaA initiator protein. This Pectobacterium carotovorum subsp. carotovorum (strain PC1) protein is DnaA initiator-associating protein DiaA.